A 368-amino-acid chain; its full sequence is WD repeat-containing protein 53 homolog (368 aa).

WD repeat units follow at residues 27-66 (GHKD…SIQS), 71-108 (FQGN…VILK), 116-155 (FNTE…LVES), 159-199 (KHTN…VLHR), 228-267 (LNPP…QYLK), and 271-315 (IHKS…NTKV). The disordered stretch occupies residues 207-231 (LPQNISKSQQQQQETTEPNRMLNPP).

It belongs to the WD repeat WDR53 family.

The chain is WD repeat-containing protein 53 homolog (wdr53) from Dictyostelium discoideum (Social amoeba).